We begin with the raw amino-acid sequence, 191 residues long: MAP6 domain-containing protein 1 (191 aa).

3 S-palmitoyl cysteine lipidation sites follow: Cys5, Cys10, and Cys11. Residues 31–106 (HGYSDPGSEE…RGQSSAPPTR (76 aa)) are disordered. A phosphoserine mark is found at Ser38 and Ser41. Mn regions lie at residues 123 to 136 (TTSY…WTGV) and 158 to 170 (DPSP…VPEV). Ser160 is subject to Phosphoserine.

This sequence belongs to the STOP family. Interacts with calmodulin. In terms of processing, palmitoylated. Palmitoylation enhances association with microtubules. Expressed in brain. Found in neurons in primary cultures, but absent in glial cells.

It is found in the golgi apparatus. It localises to the cytoplasm. The protein localises to the cytoskeleton. Its function is as follows. May have microtubule-stabilizing activity. The sequence is that of MAP6 domain-containing protein 1 (Map6d1) from Mus musculus (Mouse).